We begin with the raw amino-acid sequence, 577 residues long: Nuclear fusion protein tht1 (577 aa).

The first 29 residues, 1-29 (MKFHPTRPFGLYFEFFIIISFFFTSESTG), serve as a signal peptide directing secretion. The Lumenal segment spans residues 30–404 (DVESFMKYSN…MNVYFKGLSN (375 aa)). N-linked (GlcNAc...) asparagine glycans are attached at residues Asn-163 and Asn-372. The chain crosses the membrane as a helical span at residues 405-425 (IISSFAFIGFTLFATLSSLFF). The Cytoplasmic segment spans residues 426-433 (KVLKIHRR). Residues 434 to 454 (PIIVFGSLSIIFIHIYCFKIT) traverse the membrane as a helical segment. Over 455 to 470 (SWVNLYGWITCTIART) the chain is Lumenal. The helical transmembrane segment at 471–491 (LSFIKLNIRTFYLTAFLCALL) threads the bilayer. Residues 492–577 (NFLRYLKYRN…ESLEQSPWWD (86 aa)) are Cytoplasmic-facing.

This sequence belongs to the KAR5 family. In terms of processing, N-glycosylated.

Its subcellular location is the endoplasmic reticulum membrane. The protein resides in the nucleus membrane. Functionally, required for nuclear membrane fusion during karyogamy. The chain is Nuclear fusion protein tht1 (tht1) from Schizosaccharomyces pombe (strain 972 / ATCC 24843) (Fission yeast).